A 261-amino-acid chain; its full sequence is Serine acetyltransferase (261 aa).

The protein belongs to the transferase hexapeptide repeat family.

The protein localises to the cytoplasm. The catalysed reaction is L-serine + acetyl-CoA = O-acetyl-L-serine + CoA. It functions in the pathway amino-acid biosynthesis; L-cysteine biosynthesis; L-cysteine from L-serine: step 1/2. The polypeptide is Serine acetyltransferase (cysE) (Buchnera aphidicola subsp. Schizaphis graminum (strain Sg)).